We begin with the raw amino-acid sequence, 150 residues long: D-aminoacyl-tRNA deacylase (150 aa).

Positions 133–134 (GP) match the Gly-cisPro motif, important for rejection of L-amino acids motif.

Belongs to the DTD family. Homodimer.

It localises to the cytoplasm. The enzyme catalyses glycyl-tRNA(Ala) + H2O = tRNA(Ala) + glycine + H(+). It catalyses the reaction a D-aminoacyl-tRNA + H2O = a tRNA + a D-alpha-amino acid + H(+). Its function is as follows. An aminoacyl-tRNA editing enzyme that deacylates mischarged D-aminoacyl-tRNAs. Also deacylates mischarged glycyl-tRNA(Ala), protecting cells against glycine mischarging by AlaRS. Acts via tRNA-based rather than protein-based catalysis; rejects L-amino acids rather than detecting D-amino acids in the active site. By recycling D-aminoacyl-tRNA to D-amino acids and free tRNA molecules, this enzyme counteracts the toxicity associated with the formation of D-aminoacyl-tRNA entities in vivo and helps enforce protein L-homochirality. This is D-aminoacyl-tRNA deacylase from Micrococcus luteus (strain ATCC 4698 / DSM 20030 / JCM 1464 / CCM 169 / CCUG 5858 / IAM 1056 / NBRC 3333 / NCIMB 9278 / NCTC 2665 / VKM Ac-2230) (Micrococcus lysodeikticus).